Reading from the N-terminus, the 909-residue chain is Phosphoenolpyruvate carboxylase (909 aa).

Residues histidine 151 and lysine 578 contribute to the active site.

The protein belongs to the PEPCase type 1 family. The cofactor is Mg(2+).

The catalysed reaction is oxaloacetate + phosphate = phosphoenolpyruvate + hydrogencarbonate. Functionally, forms oxaloacetate, a four-carbon dicarboxylic acid source for the tricarboxylic acid cycle. The chain is Phosphoenolpyruvate carboxylase from Caulobacter vibrioides (strain ATCC 19089 / CIP 103742 / CB 15) (Caulobacter crescentus).